A 701-amino-acid polypeptide reads, in one-letter code: Putative pectinesterase/pectinesterase inhibitor 43 (701 aa).

The N-terminal stretch at 1–22 (MNKYVLLGVTALIMAMVICVEA) is a signal peptide. A pectinesterase inhibitor 43 region spans residues 42–195 (MITKTTVSII…QHLTSNGLAI (154 aa)). 2 stretches are compositionally biased toward low complexity: residues 221 to 256 (GILGSGSSRDESVGSSQDSPPNEDSSDDSPSTVDSS) and 263 to 275 (SSSENQSSDSSNN). Positions 221–351 (GILGSGSSRD…DPLRKLNPLN (131 aa)) are disordered. An N-linked (GlcNAc...) asparagine glycan is attached at Asn-267. Composition is skewed to polar residues over residues 276–287 (RPLDSSKNQQME) and 313–338 (QKSTSSENQPLDSSENPPQKSTSSEN). The segment at 391-688 (NVVVAKDGSG…FAPGNFLRGN (298 aa)) is pectinesterase 43. Substrate contacts are provided by Thr-467 and Gln-497. Catalysis depends on Asp-520, which acts as the Proton donor; for pectinesterase activity. The cysteines at positions 534 and 554 are disulfide-linked. Asp-541 (nucleophile; for pectinesterase activity) is an active-site residue. Residues Arg-609 and Trp-611 each contribute to the substrate site. Asn-637 carries an N-linked (GlcNAc...) asparagine glycan.

This sequence in the N-terminal section; belongs to the PMEI family. It in the C-terminal section; belongs to the pectinesterase family. Expressed in flower buds.

The protein resides in the secreted. It localises to the cell wall. It carries out the reaction [(1-&gt;4)-alpha-D-galacturonosyl methyl ester](n) + n H2O = [(1-&gt;4)-alpha-D-galacturonosyl](n) + n methanol + n H(+). The protein operates within glycan metabolism; pectin degradation; 2-dehydro-3-deoxy-D-gluconate from pectin: step 1/5. Its function is as follows. Acts in the modification of cell walls via demethylesterification of cell wall pectin. This chain is Putative pectinesterase/pectinesterase inhibitor 43 (PME43), found in Arabidopsis thaliana (Mouse-ear cress).